The following is a 292-amino-acid chain: Elongation factor Ts (292 aa).

An involved in Mg(2+) ion dislocation from EF-Tu region spans residues 79–82 (TDFV).

The protein belongs to the EF-Ts family.

It is found in the cytoplasm. Associates with the EF-Tu.GDP complex and induces the exchange of GDP to GTP. It remains bound to the aminoacyl-tRNA.EF-Tu.GTP complex up to the GTP hydrolysis stage on the ribosome. The chain is Elongation factor Ts from Metamycoplasma arthritidis (strain 158L3-1) (Mycoplasma arthritidis).